The chain runs to 353 residues: Carbamoyl phosphate synthase arginine-specific small chain (353 aa).

A CPSase region spans residues 1-162 (MEGYLVLEDG…EISTFGDGNK (162 aa)). S44, G210, and G212 together coordinate L-glutamine. Residues 163 to 349 (HIALIDFGYK…LKNVIPARRE (187 aa)) form the Glutamine amidotransferase type-1 domain. C237 functions as the Nucleophile in the catalytic mechanism. Residues L238, Q241, N279, and Y282 each contribute to the L-glutamine site. Catalysis depends on residues H322 and E324.

It belongs to the CarA family. In terms of assembly, composed of two chains; the small (or glutamine) chain promotes the hydrolysis of glutamine to ammonia, which is used by the large (or ammonia) chain to synthesize carbamoyl phosphate. Tetramer of heterodimers (alpha,beta)4.

The enzyme catalyses hydrogencarbonate + L-glutamine + 2 ATP + H2O = carbamoyl phosphate + L-glutamate + 2 ADP + phosphate + 2 H(+). It carries out the reaction L-glutamine + H2O = L-glutamate + NH4(+). It functions in the pathway amino-acid biosynthesis; L-arginine biosynthesis; carbamoyl phosphate from bicarbonate: step 1/1. Functionally, small subunit of the glutamine-dependent carbamoyl phosphate synthetase (CPSase). CPSase catalyzes the formation of carbamoyl phosphate from the ammonia moiety of glutamine, carbonate, and phosphate donated by ATP, constituting the first step of the biosynthetic pathway leading to arginine and/or urea. The small subunit (glutamine amidotransferase) binds and cleaves glutamine to supply the large subunit with the substrate ammonia. The chain is Carbamoyl phosphate synthase arginine-specific small chain from Bacillus subtilis (strain 168).